We begin with the raw amino-acid sequence, 193 residues long: Protein TEX261 (193 aa).

Transmembrane regions (helical) follow at residues 1–21 (MVGV…PPPA), 39–59 (SRII…LYVF), 67–87 (IGVG…FPFI), 94–114 (FILS…FFAE), and 122–142 (VLAY…VSLS).

Belongs to the SVP26 family.

The protein resides in the membrane. The protein is Protein TEX261 (TEX261) of Bos taurus (Bovine).